We begin with the raw amino-acid sequence, 434 residues long: Histidinol dehydrogenase (434 aa).

Tyrosine 130, glutamine 188, and asparagine 211 together coordinate NAD(+). 3 residues coordinate substrate: serine 237, glutamine 259, and histidine 262. Glutamine 259 and histidine 262 together coordinate Zn(2+). Residues glutamate 326 and histidine 327 each act as proton acceptor in the active site. Substrate is bound by residues histidine 327, aspartate 360, glutamate 414, and histidine 419. Aspartate 360 is a binding site for Zn(2+). Position 419 (histidine 419) interacts with Zn(2+).

The protein belongs to the histidinol dehydrogenase family. Homodimer. It depends on Zn(2+) as a cofactor.

The catalysed reaction is L-histidinol + 2 NAD(+) + H2O = L-histidine + 2 NADH + 3 H(+). It functions in the pathway amino-acid biosynthesis; L-histidine biosynthesis; L-histidine from 5-phospho-alpha-D-ribose 1-diphosphate: step 9/9. In terms of biological role, catalyzes the sequential NAD-dependent oxidations of L-histidinol to L-histidinaldehyde and then to L-histidine. This chain is Histidinol dehydrogenase, found in Salmonella paratyphi A (strain ATCC 9150 / SARB42).